Consider the following 995-residue polypeptide: S1 RNA-binding domain-containing protein 1 (995 aa).

Positions 23-78 are disordered; it reads SFSELSSASEEDDKEDSAWEPQKKVPRSRKQPPPKESKPKRMPQVKKNAPQISDGS. Residue lysine 84 forms a Glycyl lysine isopeptide (Lys-Gly) (interchain with G-Cter in SUMO2) linkage. The segment covering 116 to 132 has biased composition (basic residues); the sequence is TKRKCAAQPHAVRRTKK. The interval 116-164 is disordered; the sequence is TKRKCAAQPHAVRRTKKLKVDEETSKASYLEGESNSSETPSTSTVWGGT. Lysine 134 is covalently cross-linked (Glycyl lysine isopeptide (Lys-Gly) (interchain with G-Cter in SUMO2)). Residues 146–159 show a composition bias toward low complexity; the sequence is EGESNSSETPSTST. Residues lysine 166, lysine 167, and lysine 183 each participate in a glycyl lysine isopeptide (Lys-Gly) (interchain with G-Cter in SUMO2) cross-link. A Glycyl lysine isopeptide (Lys-Gly) (interchain with G-Cter in SUMO1); alternate cross-link involves residue lysine 185. Residue lysine 185 forms a Glycyl lysine isopeptide (Lys-Gly) (interchain with G-Cter in SUMO2); alternate linkage. Residues 258-288 are a coiled coil; that stretch reads ADSLREVQQTLEELRAVAKKVHSTIQKIKKE. The residue at position 861 (serine 861) is a Phosphoserine. Residues 919–992 form the S1 motif domain; the sequence is GTVLTGKVEN…PRSRITLDLI (74 aa). A Glycyl lysine isopeptide (Lys-Gly) (interchain with G-Cter in SUMO2) cross-link involves residue lysine 955. Serine 964 is subject to Phosphoserine.

The sequence is that of S1 RNA-binding domain-containing protein 1 (SRBD1) from Pongo abelii (Sumatran orangutan).